The chain runs to 349 residues: Phenylalanine--tRNA ligase alpha subunit (349 aa).

Position 259 (E259) interacts with Mg(2+).

Belongs to the class-II aminoacyl-tRNA synthetase family. Phe-tRNA synthetase alpha subunit type 1 subfamily. As to quaternary structure, tetramer of two alpha and two beta subunits. Mg(2+) serves as cofactor.

It localises to the cytoplasm. The enzyme catalyses tRNA(Phe) + L-phenylalanine + ATP = L-phenylalanyl-tRNA(Phe) + AMP + diphosphate + H(+). The protein is Phenylalanine--tRNA ligase alpha subunit of Lactobacillus gasseri (strain ATCC 33323 / DSM 20243 / BCRC 14619 / CIP 102991 / JCM 1131 / KCTC 3163 / NCIMB 11718 / NCTC 13722 / AM63).